A 180-amino-acid polypeptide reads, in one-letter code: MITFPVSLSADWQCASLFSDLSSAEQEWLFEPHSLTAKLKSRSQCFSVKVLSEQEFELSAEQQQLLGCTQTTALNREVLLLCDNKPVVYAQSWLPASVNAANNKLHNMGERPLGDVIFQDPQLTRTDIEIARFNTQHSLQQLVAQLKLPSQSLLGRRSLFSLKDYKFLVCEVFLPGAYLY.

Positions 76, 113, and 171 each coordinate substrate.

This sequence belongs to the UbiC family.

It localises to the cytoplasm. It carries out the reaction chorismate = 4-hydroxybenzoate + pyruvate. It functions in the pathway cofactor biosynthesis; ubiquinone biosynthesis. In terms of biological role, removes the pyruvyl group from chorismate, with concomitant aromatization of the ring, to provide 4-hydroxybenzoate (4HB) for the ubiquinone pathway. This is Probable chorismate pyruvate-lyase from Pseudoalteromonas translucida (strain TAC 125).